The sequence spans 151 residues: MTIWVDADACPNVIKEILYRAAERMQLPLILVANQALRVPPSRFIRTLRVAAGFDVADNEIVRQCKAGDLVITADIPLAAEVLEKGAAVLNPRGERYSDATIRERLTMRDFMDTLRASGVQTGGPNTLSPRDRQHFAAELDKWWLESQRKK.

This sequence belongs to the UPF0178 family.

The sequence is that of UPF0178 protein YaiI from Salmonella enteritidis PT4 (strain P125109).